A 376-amino-acid chain; its full sequence is Nuclear hormone receptor family member nhr-124 (376 aa).

The nuclear receptor DNA-binding region spans 11-89 (PNICAICHQK…LGMRYHNSSE (79 aa)). 2 NR C4-type zinc fingers span residues 14–34 (CAIC…CNAC) and 50–72 (CKKG…CRSC). The NR LBD domain maps to 125 to 371 (HLHALNETRY…FSKILTEACR (247 aa)).

The protein belongs to the nuclear hormone receptor family.

It localises to the nucleus. Its function is as follows. Orphan nuclear receptor. In Caenorhabditis elegans, this protein is Nuclear hormone receptor family member nhr-124 (nhr-124).